We begin with the raw amino-acid sequence, 107 residues long: uncharacterized protein (107 aa).

A disordered region spans residues Ser23–Asn64. The segment covering Ala37–Ser57 has biased composition (low complexity). The helical transmembrane segment at Leu76 to Phe98 threads the bilayer.

It localises to the membrane. This is an uncharacterized protein from Dictyostelium discoideum (Social amoeba).